A 400-amino-acid polypeptide reads, in one-letter code: MLNSLDLEGRPQDTRIVVAMSGGVDSSTTAALLKSEGYDVVGITLQLYDHGAAIHRKGACCAGQDIHDARAVADRIGIPHYVLDYESRFQESVIDSFAASYATGETPVPCIECNRSIKFRDLLSTARELGASALATGHYVSSRRLADGSRALVCASDADRDQSYFLFATTRDQLDYLRFPLGDMTKPQTRELARKFGLSVADKHDSQDICFVPTGRYTDVVGRLKPNAMEPGEIVDLDGRVLGKHQGIVHFTVGQRRGLGIASTAPLYVLRLEPSTRRVVVGPREALRMDRIVLRDVNWIGDSSLDRAVGDGLELFVRVRSTRRPQPAWLRAQDGGYQVELVAGEDGVSPGQACVFYDAPAGQARVLGGGFIKSATPRAAGKSALRGAPASRPQVADARG.

Residues 19–26 (AMSGGVDS) and Leu-45 each bind ATP. The active-site Nucleophile is Cys-113. The cysteines at positions 113 and 210 are disulfide-linked. ATP is bound at residue Gly-137. An interaction with tRNA region spans residues 160–162 (RDQ). Residue Cys-210 is the Cysteine persulfide intermediate of the active site.

This sequence belongs to the MnmA/TRMU family.

The protein resides in the cytoplasm. It catalyses the reaction S-sulfanyl-L-cysteinyl-[protein] + uridine(34) in tRNA + AH2 + ATP = 2-thiouridine(34) in tRNA + L-cysteinyl-[protein] + A + AMP + diphosphate + H(+). In terms of biological role, catalyzes the 2-thiolation of uridine at the wobble position (U34) of tRNA, leading to the formation of s(2)U34. The sequence is that of tRNA-specific 2-thiouridylase MnmA from Rhodopseudomonas palustris (strain BisB18).